A 455-amino-acid chain; its full sequence is MALSPVQDPPSHTDKTMPRRAFRRSCDRCHAQKIKCIGSEGAVARASCQRCQQAGLRCVYSERCPKRKLPKPNPAESSPASSTAGLHTSSSDSSPPVPSDGLPLDLPGPDSSGVSLQFLDPSADCDWPWSSIGVDETVVNNCLDLSHGHGHGDLSCQLELPMPDLPSPFEFSAEKSPSPSVSGSIAGAVSAQRELFDGLSTVSQELEAILLAVAVEWPKQEIWTYPIGTFFNASRRLLVYLQQQSNTRSDQGMLNECLRTKNLFMAVHCYMLIVKIFTSLSELLLSQIRHSQAGQLTPLEGHQFEPPPSSSRDRSSVDTMPIFNPNLHIGGLFSYLNPFMHALSSACTTLRVGVQLLRENESALGIPPAQGVAASVSMGKEEWADGEDVASAVTTADEDLRQPASRILSMVWSDEVGDQKAKSADAAGPRSRTLAVLRRCNREIFSLARQHNLAS.

Residues 1-22 (MALSPVQDPPSHTDKTMPRRAF) form a disordered region. The zn(2)-C6 fungal-type DNA-binding region spans 26–58 (CDRCHAQKIKCIGSEGAVARASCQRCQQAGLRC). 2 disordered regions span residues 68-113 (KLPK…DSSG) and 296-317 (LTPL…RSSV). Polar residues predominate over residues 75–88 (AESSPASSTAGLHT). The segment covering 89 to 113 (SSSDSSPPVPSDGLPLDLPGPDSSG) has biased composition (low complexity).

Its subcellular location is the nucleus. In terms of biological role, transcription factor that regulates the gene cluster that mediates the biosynthesis of monakolin K, also known as lovastatin, and which acts as a potent competitive inhibitor of HMG-CoA reductase. Monakolin K biosynthesis is performed in two stages. The first stage is catalyzed by the nonaketide synthase mokA, which belongs to type I polyketide synthases and catalyzes the iterative nine-step formation of the polyketide. This PKS stage is completed by the action of dehydrogenase mokE, which catalyzes the NADPH-dependent reduction of the unsaturated tetra-, penta- and heptaketide intermediates that arise during the mokA-mediated biosynthesis of the nonaketide chain and leads to dihydromonacolin L. Covalently bound dihydromonacolin L is released from mokA by the mokD esterase. Conversion of dihydromonacolin L into monacolin L and then monacolin J is subsequently performed with the participation of molecular oxygen and P450 monoogygenase mokC. Finally, mokF performs the conversion of monacoline J to monacoline K through the addition of the side-chain diketide moiety (2R)-2-methylbutanoate produced by the diketide synthase mokB. HMG-CoA reductase mokG may act as a down-regulator of monacolin K production. The sequence is that of Transcription factor mokH from Monascus pilosus (Red mold).